Here is a 252-residue protein sequence, read N- to C-terminus: Imidazole glycerol phosphate synthase subunit HisF (252 aa).

Active-site residues include Asp11 and Asp130.

This sequence belongs to the HisA/HisF family. Heterodimer of HisH and HisF.

Its subcellular location is the cytoplasm. It carries out the reaction 5-[(5-phospho-1-deoxy-D-ribulos-1-ylimino)methylamino]-1-(5-phospho-beta-D-ribosyl)imidazole-4-carboxamide + L-glutamine = D-erythro-1-(imidazol-4-yl)glycerol 3-phosphate + 5-amino-1-(5-phospho-beta-D-ribosyl)imidazole-4-carboxamide + L-glutamate + H(+). It functions in the pathway amino-acid biosynthesis; L-histidine biosynthesis; L-histidine from 5-phospho-alpha-D-ribose 1-diphosphate: step 5/9. In terms of biological role, IGPS catalyzes the conversion of PRFAR and glutamine to IGP, AICAR and glutamate. The HisF subunit catalyzes the cyclization activity that produces IGP and AICAR from PRFAR using the ammonia provided by the HisH subunit. This chain is Imidazole glycerol phosphate synthase subunit HisF, found in Syntrophomonas wolfei subsp. wolfei (strain DSM 2245B / Goettingen).